Reading from the N-terminus, the 561-residue chain is Methyl-accepting chemotaxis protein CtpM (561 aa).

Residues 1 to 11 (MMRLTLKSKVL) are Cytoplasmic-facing. The helical transmembrane segment at 12-32 (LLAMVPVLLFALVLSGGAVLI) threads the bilayer. Topologically, residues 33–205 (LKKQADAEVK…KQDIDERIGT (173 aa)) are periplasmic. A helical membrane pass occupies residues 206–226 (LIASIVGIAGVLLVVLLVIGL). The Cytoplasmic segment spans residues 227-561 (AVANAMLRPL…LGRLVGQFRI (335 aa)). Positions 230 to 284 (NAMLRPLHQIRQNLDDIAAGEGDLTRRLPVTSYDELGELAGSFNRFVEKIHGLVR) constitute an HAMP domain. The Methyl-accepting transducer domain maps to 289 to 525 (MTGDLKQLVE…EINRSVHQIA (237 aa)). The tract at residues 333–357 (HEVAQSAQRAAEAAQQTDHEGQAAK) is disordered. Residues 336 to 348 (AQSAQRAAEAAQQ) show a composition bias toward low complexity.

This sequence belongs to the methyl-accepting chemotaxis (MCP) protein family. As to quaternary structure, homodimer. The ligand-binding domain (LBD) is dimeric in the presence and the absence of ligands.

The protein resides in the cell inner membrane. Functionally, chemotactic-signal transducers respond to changes in the concentration of attractants and repellents in the environment, transduce a signal from the outside to the inside of the cell, and facilitate sensory adaptation through the variation of the level of methylation. Directly recognizes five C4-dicarboxylic acids: L-malic, citramalic, citraconic, bromosuccinic and methylsuccinic acids. Three of the identified ligands act as chemoattractants (L-malic, D,L-bromosuccinic and L-citramalic acids) whereas two of them (L-methylsuccinic and citraconic acids) behave as antagonists by inhibiting the downstream chemotaxis signaling cascade. Antagonists compete with chemoattractants, thereby decreasing the affinity for chemoattractants and the subsequent chemotactic response. Acts through the che chemosensory pathway. This is Methyl-accepting chemotaxis protein CtpM from Pseudomonas aeruginosa (strain ATCC 15692 / DSM 22644 / CIP 104116 / JCM 14847 / LMG 12228 / 1C / PRS 101 / PAO1).